We begin with the raw amino-acid sequence, 86 residues long: Anti-adapter protein IraP (86 aa).

A coiled-coil region spans residues 1–36 (MKNLIAELLFKLAQKEEESKELCAQVEALEIIVTAM).

It belongs to the IraP family. In terms of assembly, interacts with RssB.

The protein resides in the cytoplasm. In terms of biological role, inhibits RpoS proteolysis by regulating RssB activity, thereby increasing the stability of the sigma stress factor RpoS especially during phosphate starvation, but also in stationary phase and during nitrogen starvation. Its effect on RpoS stability is due to its interaction with RssB, which probably blocks the interaction of RssB with RpoS, and the consequent delivery of the RssB-RpoS complex to the ClpXP protein degradation pathway. The sequence is that of Anti-adapter protein IraP from Escherichia coli O127:H6 (strain E2348/69 / EPEC).